The following is a 184-amino-acid chain: Probable RNA 2'-phosphotransferase (184 aa).

Belongs to the KptA/TPT1 family.

Functionally, removes the 2'-phosphate from RNA via an intermediate in which the phosphate is ADP-ribosylated by NAD followed by a presumed transesterification to release the RNA and generate ADP-ribose 1''-2''-cyclic phosphate (APPR&gt;P). May function as an ADP-ribosylase. This chain is Probable RNA 2'-phosphotransferase, found in Escherichia coli (strain 55989 / EAEC).